The sequence spans 747 residues: Putative T-box protein 31 (747 aa).

Positions 33 to 199 (QMLTKRKKTN…AGPAAKKTPD (167 aa)) form a DNA-binding region, T-box. Disordered regions lie at residues 268 to 289 (SLSS…DFDD) and 332 to 364 (SINN…VRDK). Over residues 332–358 (SINNPGYLSTASSPAALNQDSSASEKS) the composition is skewed to polar residues.

It is found in the nucleus. The protein is Putative T-box protein 31 (tbx-31) of Caenorhabditis elegans.